A 275-amino-acid polypeptide reads, in one-letter code: Exosome complex component RRP40 (275 aa).

Alanine 2 carries the post-translational modification N-acetylalanine. A Glycyl lysine isopeptide (Lys-Gly) (interchain with G-Cter in SUMO2) cross-link involves residue lysine 151.

It belongs to the RRP40 family. In terms of assembly, component of the RNA exosome core complex (Exo-9), composed of EXOSC1, EXOSC2, EXOSC3, EXOSC4, EXOSC5, EXOSC6, EXOSC7, EXOSC8 and EXOSC9; within the complex interacts with EXOSC5 and EXOSC9. The catalytically inactive RNA exosome core complex (Exo-9) associates with the catalytic subunit EXOSC10/RRP6. Exo-9 may associate with DIS3 to form the nucleolar exosome complex, or DIS3L to form the cytoplasmic exosome complex. Exo-9 is formed by a hexameric base ring consisting of the heterodimers EXOSC4-EXOSC9, EXOSC5-EXOSC8 and EXOSC6-EXOSC7, and a cap ring consisting of EXOSC1, EXOSC2 and EXOSC3. The RNA exosome complex associates with cofactors C1D/RRP47, MPHOSPH6/MPP6 and MTREX/MTR4. Interacts with MPHOSPH6/MPP6; the interaction is direct. Interacts with GTPBP1. Interacts with ZC3HAV1. Interacts with DDX17 only in the presence of ZC3HAV1 in an RNA-independent manner. Interacts with DHX36; this interaction occurs in a RNase-insensitive manner. Interacts with HBS1L isoform 2.

It localises to the cytoplasm. It is found in the nucleus. Its subcellular location is the nucleolus. Its function is as follows. Non-catalytic component of the RNA exosome complex which has 3'-&gt;5' exoribonuclease activity and participates in a multitude of cellular RNA processing and degradation events. In the nucleus, the RNA exosome complex is involved in proper maturation of stable RNA species such as rRNA, snRNA and snoRNA, in the elimination of RNA processing by-products and non-coding 'pervasive' transcripts, such as antisense RNA species and promoter-upstream transcripts (PROMPTs), and of mRNAs with processing defects, thereby limiting or excluding their export to the cytoplasm. The RNA exosome may be involved in Ig class switch recombination (CSR) and/or Ig variable region somatic hypermutation (SHM) by targeting AICDA deamination activity to transcribed dsDNA substrates. In the cytoplasm, the RNA exosome complex is involved in general mRNA turnover and specifically degrades inherently unstable mRNAs containing AU-rich elements (AREs) within their 3' untranslated regions, and in RNA surveillance pathways, preventing translation of aberrant mRNAs. It seems to be involved in degradation of histone mRNA. The catalytic inactive RNA exosome core complex of 9 subunits (Exo-9) is proposed to play a pivotal role in the binding and presentation of RNA for ribonucleolysis, and to serve as a scaffold for the association with catalytic subunits and accessory proteins or complexes. EXOSC3 as peripheral part of the Exo-9 complex stabilizes the hexameric ring of RNase PH-domain subunits through contacts with EXOSC9 and EXOSC5. This chain is Exosome complex component RRP40 (EXOSC3), found in Homo sapiens (Human).